Consider the following 73-residue polypeptide: Translation initiation factor IF-1 (73 aa).

Residues 1–73 (MAKKEDTLVL…TKARVVYRHR (73 aa)) form the S1-like domain.

Belongs to the IF-1 family. In terms of assembly, component of the 30S ribosomal translation pre-initiation complex which assembles on the 30S ribosome in the order IF-2 and IF-3, IF-1 and N-formylmethionyl-tRNA(fMet); mRNA recruitment can occur at any time during PIC assembly.

It is found in the cytoplasm. In terms of biological role, one of the essential components for the initiation of protein synthesis. Stabilizes the binding of IF-2 and IF-3 on the 30S subunit to which N-formylmethionyl-tRNA(fMet) subsequently binds. Helps modulate mRNA selection, yielding the 30S pre-initiation complex (PIC). Upon addition of the 50S ribosomal subunit IF-1, IF-2 and IF-3 are released leaving the mature 70S translation initiation complex. This is Translation initiation factor IF-1 from Chlamydia pneumoniae (Chlamydophila pneumoniae).